The chain runs to 821 residues: BDNF/NT-3 growth factors receptor (821 aa).

The signal sequence occupies residues 1 to 31 (MSPWLKWHGPAMARLWGLCLLVLGFWRASLA). 2 disulfide bridges follow: cysteine 32–cysteine 38 and cysteine 36–cysteine 45. The LRRNT domain maps to 32–61 (CPTSCKCSSARIWCTEPSPGIVAFPRLEPN). The Extracellular segment spans residues 32-429 (CPTSCKCSSA…DVADQSNREH (398 aa)). 3 N-linked (GlcNAc...) asparagine glycosylation sites follow: asparagine 67, asparagine 95, and asparagine 121. LRR repeat units follow at residues 92–113 (GLRNLTIVDSGLKFVAYKAFLK) and 116–137 (NLRHINFTRNKLTSLSRRHFRH). An LRRCT domain is found at 148-196 (NPFTCSCDIMWLKTLQETKSSPDTQDLYCLNESSKNMPLANLQIPNCGL). Disulfide bonds link cysteine 152-cysteine 176 and cysteine 154-cysteine 194. N-linked (GlcNAc...) asparagine glycans are attached at residues asparagine 178, asparagine 205, asparagine 241, asparagine 254, asparagine 280, asparagine 325, asparagine 338, asparagine 350, and asparagine 411. Ig-like C2-type domains follow at residues 197–282 (PSAR…VNLT) and 301–365 (WCIP…MAKN). Cysteine 218 and cysteine 266 are joined by a disulfide. Cysteines 302 and 345 form a disulfide. Residues 430 to 453 (LSVYAVVVIASVVGFCLLVMLLLL) form a helical membrane-spanning segment. Residues 454-465 (KLARHSKFGMKG) are interaction with MAPK8IP3/JIP3. Residues 454 to 821 (KLARHSKFGM…ASPVYLDILG (368 aa)) lie on the Cytoplasmic side of the membrane. The tract at residues 474-497 (DDSASPLHHISNGSNTPSSSEGGP) is disordered. Over residues 484 to 494 (SNGSNTPSSSE) the composition is skewed to polar residues. Tyrosine 515 carries the phosphotyrosine modification. The Protein kinase domain occupies 537–806 (IVLKRELGEG…KNIKSIHTLL (270 aa)). Residues 543–551 (LGEGAFGKV) and lysine 571 contribute to the ATP site. The Proton acceptor role is filled by aspartate 675. Residues tyrosine 701, tyrosine 705, tyrosine 706, and tyrosine 816 each carry the phosphotyrosine; by autocatalysis modification.

It belongs to the protein kinase superfamily. Tyr protein kinase family. Insulin receptor subfamily. Exists in a dynamic equilibrium between monomeric (low affinity) and dimeric (high affinity) structures. Interacts (phosphorylated upon activation by BDNF) with SHC1; mediates SHC1 phosphorylation and activation. Interacts (phosphorylated upon activation by BDNF) with PLCG1 and/or PLCG2; mediates PLCG1 phosphorylation and activation. Interacts with SH2B1 and SH2B2. Interacts with NGFR; may regulate the ligand specificity of the receptor. Interacts with SORCS2; this interaction is important for normal targeting to post-synaptic densities in response to high-frequency stimulation. Interacts (phosphorylated upon ligand-binding) with SH2D1A; regulates NTRK2. Interacts with SQSTM1 and KIDINS220. Interacts (phosphorylated upon ligand-binding) with FRS2; activates the MAPK signaling pathway. Interacts with APPL1. Interacts with MAPK8IP3/JIP3 and KLC1; interaction with KLC1 is mediated by MAPK8IP3/JIP3. Interacts with SORL1; this interaction facilitates NTRK2 trafficking between synaptic plasma membranes, postsynaptic densities and cell soma, hence positively regulates BDNF signaling. Interacts with SLITRK2. In terms of processing, phosphorylated. Undergoes ligand-mediated autophosphorylation that is required for interaction with SHC1 and PLCG1 and other downstream effectors. Some isoforms are not phosphorylated. Ubiquitinated. Undergoes polyubiquitination upon activation; regulated by NGFR. Ubiquitination regulates the internalization of the receptor. As to expression, expressed in the brain, in neurons (at protein level). Detected in hippocampus (at protein level). Widely expressed in the central and peripheral nervous system. The different forms are differentially expressed in various cell types. Isoform GP95-TRKB is specifically expressed in glial cells.

It localises to the cell membrane. The protein resides in the endosome membrane. The protein localises to the early endosome membrane. Its subcellular location is the cell projection. It is found in the axon. It localises to the dendrite. The protein resides in the cytoplasm. The protein localises to the perinuclear region. Its subcellular location is the postsynaptic density. The catalysed reaction is L-tyrosyl-[protein] + ATP = O-phospho-L-tyrosyl-[protein] + ADP + H(+). The formation of active receptors dimers able to fully transduce the ligand-mediated signal, may be negatively regulated by the formation of inactive heterodimers with the non-catalytic isoforms. The neuronal activity and the influx of calcium positively regulate the kinase activity and the internalization of the receptor which are both important for active signaling. Regulated by NGFR that may control the internalization of the receptor. NGFR may also stimulate the activation by BDNF compared to NTF3 and NTF4. SH2D1A inhibits the autophosphorylation of the receptor, and alters the recruitment and activation of downstream effectors and signaling cascades. Its function is as follows. Receptor tyrosine kinase involved in the development and the maturation of the central and the peripheral nervous systems through regulation of neuron survival, proliferation, migration, differentiation, and synapse formation and plasticity. Receptor for BDNF/brain-derived neurotrophic factor and NTF4/neurotrophin-4. Alternatively can also bind NTF3/neurotrophin-3 which is less efficient in activating the receptor but regulates neuron survival through NTRK2. Upon ligand-binding, undergoes homodimerization, autophosphorylation and activation. Recruits, phosphorylates and/or activates several downstream effectors including SHC1, FRS2, SH2B1, SH2B2 and PLCG1 that regulate distinct overlapping signaling cascades. Through SHC1, FRS2, SH2B1, SH2B2 activates the GRB2-Ras-MAPK cascade that regulates for instance neuronal differentiation including neurite outgrowth. Through the same effectors controls the Ras-PI3 kinase-AKT1 signaling cascade that mainly regulates growth and survival. Through PLCG1 and the downstream protein kinase C-regulated pathways controls synaptic plasticity. Thereby, plays a role in learning and memory by regulating both short term synaptic function and long-term potentiation. PLCG1 also leads to NF-Kappa-B activation and the transcription of genes involved in cell survival. Hence, it is able to suppress anoikis, the apoptosis resulting from loss of cell-matrix interactions. Isoform GP95-TRKB may also play a role in neutrophin-dependent calcium signaling in glial cells and mediate communication between neurons and glia. This Mus musculus (Mouse) protein is BDNF/NT-3 growth factors receptor.